The sequence spans 735 residues: Ethylene receptor 1 (735 aa).

The next 3 helical transmembrane spans lie at 23–43 (ISDF…IYFV), 54–74 (VLVQ…INLW), and 92–112 (VLTA…IPDL). Positions 65 and 69 each coordinate Cu cation. A GAF domain is found at 158–307 (DRHTILKTTL…VVADQVAVAL (150 aa)). The region spanning 350 to 586 (VMNHEMRTPM…IFDVKLAISN (237 aa)) is the Histidine kinase domain. The residue at position 353 (His-353) is a Phosphohistidine; by autocatalysis. The Response regulatory domain occupies 609–726 (KVLVMDENGV…NMRNVLSDRL (118 aa)). Asp-657 bears the 4-aspartylphosphate mark. Residue Lys-711 forms a Glycyl lysine isopeptide (Lys-Gly) (interchain with G-Cter in ubiquitin) linkage.

This sequence belongs to the ethylene receptor family. Homodimer; disulfide-linked. Requires Cu cation as cofactor. Post-translationally, activation probably requires a transfer of a phosphate group between a His in the transmitter domain and an Asp of the receiver domain.

It is found in the endoplasmic reticulum membrane. The enzyme catalyses ATP + protein L-histidine = ADP + protein N-phospho-L-histidine.. In terms of biological role, may act early in the ethylene signal transduction pathway, possibly as an ethylene receptor, or as a regulator of the pathway. The sequence is that of Ethylene receptor 1 (ETR1) from Brassica oleracea (Wild cabbage).